We begin with the raw amino-acid sequence, 263 residues long: 4-hydroxy-2-oxo-heptane-1,7-dioate aldolase (263 aa).

His45 acts as the Proton acceptor in catalysis. A substrate-binding site is contributed by Gln147. Glu149 serves as a coordination point for a divalent metal cation. Residues Ala174 and Asp175 each contribute to the substrate site. Asp175 lines the a divalent metal cation pocket.

Belongs to the HpcH/HpaI aldolase family. In terms of assembly, homohexamer; trimer of dimers. The cofactor is a divalent metal cation.

It carries out the reaction 4-hydroxy-2-oxoheptanedioate = succinate semialdehyde + pyruvate. It functions in the pathway aromatic compound metabolism; 4-hydroxyphenylacetate degradation; pyruvate and succinate semialdehyde from 4-hydroxyphenylacetate: step 7/7. Its function is as follows. Catalyzes the reversible retro-aldol cleavage of 4-hydroxy-2-ketoheptane-1,7-dioate (HKHD) to pyruvate and succinic semialdehyde. In Salmonella newport (strain SL254), this protein is 4-hydroxy-2-oxo-heptane-1,7-dioate aldolase.